The chain runs to 202 residues: MKYFLWSAVTIFAIVNVVGAKNSDFDPRCLRACTAIYRPVCGFDGKQYRIFASECVMAFENCNLLLKSQKAFQKTLMSFCQVEEDFDSDFCPEVCPLLYKPVCGSYGDIKKIFPNECELKRANCKFGEAWEKINMDICRNISFKSELIDPKKKCLKPCNLNWDPICAFDGEKYFTFGNRCDMEIQTCLRSEKNWTLIRKGEC.

Positions 1–20 (MKYFLWSAVTIFAIVNVVGA) are cleaved as a signal peptide. Residues 21–87 (KNSDFDPRCL…SFCQVEEDFD (67 aa)) constitute a propeptide that is removed on maturation. 3 Kazal-like domains span residues 23 to 77 (SDFD…KTLM), 85 to 140 (DFDS…ICRN), and 148 to 202 (IDPK…KGEC). 5 disulfide bridges follow: cysteine 29–cysteine 62, cysteine 33–cysteine 55, cysteine 91–cysteine 124, cysteine 95–cysteine 117, and cysteine 103–cysteine 138. N-linked (GlcNAc...) asparagine glycosylation is present at asparagine 140. Residues 142–202 (SFKSELIDPK…NWTLIRKGEC (61 aa)) constitute a propeptide that is removed on maturation. 3 disulfide bridges follow: cysteine 154/cysteine 187, cysteine 158/cysteine 180, and cysteine 166/cysteine 202. N-linked (GlcNAc...) asparagine glycosylation is present at asparagine 193.

As to expression, expressed by the venom gland.

It localises to the secreted. In terms of biological role, may act as a serine protease inhibitor, since it possess the kazal serine protease inhibitor signature. The recombinant peptide does not produce toxic effects on insects. The chain is U-Kazal-Dg21.2 from Dolopus genitalis (Giant Australian assassin fly).